Consider the following 996-residue polypeptide: RNA2 polyprotein (996 aa).

Residues 363-369 (LRYTIGG) are involved in tubule formation by the movement protein. The segment at 368–398 (GGSKPKNKLADKAHNEEAETSDSKGIIDPKD) is disordered. The segment covering 375–398 (KLADKAHNEEAETSDSKGIIDPKD) has biased composition (basic and acidic residues).

In terms of assembly, interacts with the large capsid protein. As to quaternary structure, interacts with the small capsid protein. Homomultimer; assembles as pentons. Interacts with the movement protein (via C-terminus). Interacts (via C-terminus) with the large capsid protein. Specific enzymatic cleavages by picornain 3C-like protease in vivo yield mature proteins.

Its subcellular location is the host cell junction. The protein resides in the host plasmodesma. It localises to the virion. In terms of biological role, responsible for viral RNA2 accumulation. May function by recruiting the RNA1-encoded polyprotein that contains the replication protein to RNA2 and enable its replication. Transports the viral genome to neighboring plant cells directly through plasmosdesmata, without any budding. The movement protein allows efficient cell to cell propagation, by bypassing the host cell wall barrier. Acts by forming a tubular structure at the host plasmodesmata, enlarging it enough to allow free passage of virion capsids. Binds to GTP and to single-stranded RNA and single-stranded DNA in a non-sequence-specific manner. Its function is as follows. Together with the mature small capsid protein, forms an icosahedral capsid (T=3) enclosing the viral positive strand RNA genome, with a diameter of approximately 300 Angstroms. The capsid is formed from 60 copies each of the large and the mature small capsid protein. The large capsid protein interacts with the viral RNA. Functionally, together with the large capsid protein, forms an icosahedral capsid (T=3) enclosing the viral positive strand RNA genome, with a diameter of approximately 300 Angstroms. The capsid is formed from 60 copies each of the large and the mature small capsid protein. The mature small capsid protein forms the turrets at the fivefold axes of the viral particle. The polypeptide is RNA2 polyprotein (Red clover mottle virus (RCMV)).